We begin with the raw amino-acid sequence, 220 residues long: tRNA (guanine-N(7)-)-methyltransferase (220 aa).

S-adenosyl-L-methionine is bound by residues glutamate 42, glutamate 67, and aspartate 122. Aspartate 122 is an active-site residue. Substrate contacts are provided by residues lysine 126, aspartate 158, and 198 to 201; that span reads TEYE.

It belongs to the class I-like SAM-binding methyltransferase superfamily. TrmB family.

It carries out the reaction guanosine(46) in tRNA + S-adenosyl-L-methionine = N(7)-methylguanosine(46) in tRNA + S-adenosyl-L-homocysteine. It participates in tRNA modification; N(7)-methylguanine-tRNA biosynthesis. Functionally, catalyzes the formation of N(7)-methylguanine at position 46 (m7G46) in tRNA. The chain is tRNA (guanine-N(7)-)-methyltransferase from Mycoplasma capricolum subsp. capricolum (strain California kid / ATCC 27343 / NCTC 10154).